We begin with the raw amino-acid sequence, 279 residues long: Hydroxyethylthiazole kinase (279 aa).

Methionine 58 lines the substrate pocket. ATP contacts are provided by lysine 134 and threonine 180. Glycine 207 provides a ligand contact to substrate.

Belongs to the Thz kinase family. Mg(2+) is required as a cofactor.

It carries out the reaction 5-(2-hydroxyethyl)-4-methylthiazole + ATP = 4-methyl-5-(2-phosphooxyethyl)-thiazole + ADP + H(+). Its pathway is cofactor biosynthesis; thiamine diphosphate biosynthesis; 4-methyl-5-(2-phosphoethyl)-thiazole from 5-(2-hydroxyethyl)-4-methylthiazole: step 1/1. Its function is as follows. Catalyzes the phosphorylation of the hydroxyl group of 4-methyl-5-beta-hydroxyethylthiazole (THZ). This is Hydroxyethylthiazole kinase from Methanoculleus marisnigri (strain ATCC 35101 / DSM 1498 / JR1).